The sequence spans 484 residues: tRNA sulfurtransferase (484 aa).

The 105-residue stretch at 61–165 (ILLVELLGRI…NDKMMLIKAR (105 aa)) folds into the THUMP domain. ATP contacts are provided by residues 183–184 (LI), K265, G287, and Q296. Cysteines 344 and 456 form a disulfide. The 81-residue stretch at 404-484 (LSANDVILDI…DNVKVLNKIS (81 aa)) folds into the Rhodanese domain. The active-site Cysteine persulfide intermediate is the C456.

Belongs to the ThiI family.

The protein resides in the cytoplasm. The enzyme catalyses [ThiI sulfur-carrier protein]-S-sulfanyl-L-cysteine + a uridine in tRNA + 2 reduced [2Fe-2S]-[ferredoxin] + ATP + H(+) = [ThiI sulfur-carrier protein]-L-cysteine + a 4-thiouridine in tRNA + 2 oxidized [2Fe-2S]-[ferredoxin] + AMP + diphosphate. It carries out the reaction [ThiS sulfur-carrier protein]-C-terminal Gly-Gly-AMP + S-sulfanyl-L-cysteinyl-[cysteine desulfurase] + AH2 = [ThiS sulfur-carrier protein]-C-terminal-Gly-aminoethanethioate + L-cysteinyl-[cysteine desulfurase] + A + AMP + 2 H(+). It functions in the pathway cofactor biosynthesis; thiamine diphosphate biosynthesis. Catalyzes the ATP-dependent transfer of a sulfur to tRNA to produce 4-thiouridine in position 8 of tRNAs, which functions as a near-UV photosensor. Also catalyzes the transfer of sulfur to the sulfur carrier protein ThiS, forming ThiS-thiocarboxylate. This is a step in the synthesis of thiazole, in the thiamine biosynthesis pathway. The sulfur is donated as persulfide by IscS. The protein is tRNA sulfurtransferase of Histophilus somni (strain 129Pt) (Haemophilus somnus).